A 411-amino-acid polypeptide reads, in one-letter code: Formate-dependent phosphoribosylglycinamide formyltransferase (411 aa).

A N(1)-(5-phospho-beta-D-ribosyl)glycinamide-binding site is contributed by 25 to 26 (EL). Residues R118, K159, 164–169 (SSGAGQ), 199–202 (EQYI), and E207 contribute to the ATP site. In terms of domain architecture, ATP-grasp spans 123–318 (TFAHDKLGLP…EFDLHARAIL (196 aa)). Positions 277 and 289 each coordinate Mg(2+). Residues D296, K366, and 373-374 (RR) contribute to the N(1)-(5-phospho-beta-D-ribosyl)glycinamide site.

Belongs to the PurK/PurT family. Homodimer.

It catalyses the reaction N(1)-(5-phospho-beta-D-ribosyl)glycinamide + formate + ATP = N(2)-formyl-N(1)-(5-phospho-beta-D-ribosyl)glycinamide + ADP + phosphate + H(+). Its pathway is purine metabolism; IMP biosynthesis via de novo pathway; N(2)-formyl-N(1)-(5-phospho-D-ribosyl)glycinamide from N(1)-(5-phospho-D-ribosyl)glycinamide (formate route): step 1/1. Its function is as follows. Involved in the de novo purine biosynthesis. Catalyzes the transfer of formate to 5-phospho-ribosyl-glycinamide (GAR), producing 5-phospho-ribosyl-N-formylglycinamide (FGAR). Formate is provided by PurU via hydrolysis of 10-formyl-tetrahydrofolate. The sequence is that of Formate-dependent phosphoribosylglycinamide formyltransferase from Corynebacterium jeikeium (strain K411).